The chain runs to 164 residues: UPF0114 protein BCI_0033 (164 aa).

The next 3 membrane-spanning stretches (helical) occupy residues 15-35 (LLFP…LKFF), 53-73 (LILI…LVMV), and 136-156 (IMWC…MAYI).

It belongs to the UPF0114 family.

It localises to the cell membrane. The polypeptide is UPF0114 protein BCI_0033 (Baumannia cicadellinicola subsp. Homalodisca coagulata).